The chain runs to 421 residues: Histidine--tRNA ligase (421 aa).

It belongs to the class-II aminoacyl-tRNA synthetase family.

The protein localises to the cytoplasm. It carries out the reaction tRNA(His) + L-histidine + ATP = L-histidyl-tRNA(His) + AMP + diphosphate + H(+). This chain is Histidine--tRNA ligase, found in Pyrobaculum islandicum (strain DSM 4184 / JCM 9189 / GEO3).